Consider the following 891-residue polypeptide: Protein SEY1 homolog (891 aa).

The Cytoplasmic portion of the chain corresponds to 1-754 (MNLHLVDSDG…LRAAEAGNQR (754 aa)). In terms of domain architecture, GB1/RHD3-type G spans 52–318 (GLNYHVVGVF…RCSDYLFSYH (267 aa)). GTP is bound at residue 62–69 (GGQSSGKS). A helical transmembrane segment spans residues 755-775 (LPAWVIPALFILGWNELLYVL). Over 776 to 778 (TSP) the chain is Lumenal. Residues 779-799 (ALLVLVVVICAVFFRQFFVSQ) form a helical membrane-spanning segment. Topologically, residues 800–891 (WHAFEETGPA…MRHRTTHKLD (92 aa)) are cytoplasmic. Polar residues predominate over residues 863 to 880 (STHADPAPSNTTVPTAQA). Residues 863–891 (STHADPAPSNTTVPTAQATMRHRTTHKLD) form a disordered region. Positions 882–891 (MRHRTTHKLD) are enriched in basic residues.

The protein belongs to the TRAFAC class dynamin-like GTPase superfamily. GB1/RHD3 GTPase family. RHD3 subfamily.

Its subcellular location is the endoplasmic reticulum membrane. In terms of biological role, probable GTP-binding protein that may be involved in cell development. The chain is Protein SEY1 homolog from Leishmania braziliensis.